Reading from the N-terminus, the 101-residue chain is Small ribosomal subunit protein uS14 (101 aa).

Belongs to the universal ribosomal protein uS14 family. As to quaternary structure, part of the 30S ribosomal subunit. Contacts proteins S3 and S10.

Its function is as follows. Binds 16S rRNA, required for the assembly of 30S particles and may also be responsible for determining the conformation of the 16S rRNA at the A site. The polypeptide is Small ribosomal subunit protein uS14 (Synechococcus sp. (strain JA-2-3B'a(2-13)) (Cyanobacteria bacterium Yellowstone B-Prime)).